The sequence spans 227 residues: Orotate phosphoribosyltransferase 2 (227 aa).

41–42 (FF) contributes to the orotate binding site. Residues 79-80 (YK), Arg-109, Lys-110, Lys-113, His-115, and 135-143 (DDVMTAGTA) contribute to the 5-phospho-alpha-D-ribose 1-diphosphate site. Orotate contacts are provided by Thr-139 and Arg-167.

It belongs to the purine/pyrimidine phosphoribosyltransferase family. PyrE subfamily. Homodimer.

The catalysed reaction is orotidine 5'-phosphate + diphosphate = orotate + 5-phospho-alpha-D-ribose 1-diphosphate. The protein operates within pyrimidine metabolism; UMP biosynthesis via de novo pathway; UMP from orotate: step 1/2. Its function is as follows. Catalyzes the transfer of a ribosyl phosphate group from 5-phosphoribose 1-diphosphate to orotate, leading to the formation of orotidine monophosphate (OMP). This is Orotate phosphoribosyltransferase 2 (URA10) from Saccharomyces cerevisiae (strain ATCC 204508 / S288c) (Baker's yeast).